The chain runs to 105 residues: MEVSQFDNVSVVKKANLYFDGKCVSHTVLFPDGTRKTLGVIFPASLTFNTGAAEIMEINAGTCRVRLAGSEDWQAYGAGQQFSVPGNSSFDIEVQETLDYVCHFE.

It belongs to the nucleoside phosphorylase PpnP family.

The catalysed reaction is a purine D-ribonucleoside + phosphate = a purine nucleobase + alpha-D-ribose 1-phosphate. It catalyses the reaction adenosine + phosphate = alpha-D-ribose 1-phosphate + adenine. It carries out the reaction cytidine + phosphate = cytosine + alpha-D-ribose 1-phosphate. The enzyme catalyses guanosine + phosphate = alpha-D-ribose 1-phosphate + guanine. The catalysed reaction is inosine + phosphate = alpha-D-ribose 1-phosphate + hypoxanthine. It catalyses the reaction thymidine + phosphate = 2-deoxy-alpha-D-ribose 1-phosphate + thymine. It carries out the reaction uridine + phosphate = alpha-D-ribose 1-phosphate + uracil. The enzyme catalyses xanthosine + phosphate = alpha-D-ribose 1-phosphate + xanthine. Its function is as follows. Catalyzes the phosphorolysis of diverse nucleosides, yielding D-ribose 1-phosphate and the respective free bases. Can use uridine, adenosine, guanosine, cytidine, thymidine, inosine and xanthosine as substrates. Also catalyzes the reverse reactions. In Cupriavidus taiwanensis (strain DSM 17343 / BCRC 17206 / CCUG 44338 / CIP 107171 / LMG 19424 / R1) (Ralstonia taiwanensis (strain LMG 19424)), this protein is Pyrimidine/purine nucleoside phosphorylase.